The primary structure comprises 387 residues: Leucine aminopeptidase 1 (387 aa).

Residues 1-18 (MKIRAALALSATASGVLA) form the signal peptide. A propeptide spanning residues 19–87 (AVVPQQALLN…YPTLHQASNV (69 aa)) is cleaved from the precursor. N-linked (GlcNAc...) asparagine glycosylation occurs at Asn179. Zn(2+) is bound by residues His187, Asp206, Glu245, and Asp272. Cysteines 321 and 325 form a disulfide. A Zn(2+)-binding site is contributed by His354.

It belongs to the peptidase M28 family. M28E subfamily. Monomer. Requires Zn(2+) as cofactor.

The protein resides in the secreted. Extracellular aminopeptidase that allows assimilation of proteinaceous substrates. The protein is Leucine aminopeptidase 1 (lap1) of Aspergillus oryzae (strain ATCC 42149 / RIB 40) (Yellow koji mold).